A 111-amino-acid polypeptide reads, in one-letter code: UPF0342 protein gbs1446 (111 aa).

The protein belongs to the UPF0342 family.

This Streptococcus agalactiae serotype III (strain NEM316) protein is UPF0342 protein gbs1446.